Here is a 141-residue protein sequence, read N- to C-terminus: Lutropin subunit beta (141 aa).

A signal peptide spans 1–20; the sequence is MERLQGLLLWLLLSPSVVWA. 6 disulfides stabilise this stretch: C29/C77, C43/C92, C46/C130, C54/C108, C58/C110, and C113/C120. N-linked (GlcNAc...) asparagine glycosylation occurs at N33.

The protein belongs to the glycoprotein hormones subunit beta family. Heterodimer of a common alpha chain and a unique beta chain which confers biological specificity to thyrotropin, lutropin, follitropin and gonadotropin.

It is found in the secreted. Functionally, promotes spermatogenesis and ovulation by stimulating the testes and ovaries to synthesize steroids. The polypeptide is Lutropin subunit beta (Lhb) (Rattus norvegicus (Rat)).